The following is a 303-amino-acid chain: uncharacterized protein (303 aa).

Residues 7–12 (GAGGVG) and Asn101 each bind NADP(+). Lys184 functions as the Proton donor in the catalytic mechanism. Glu267 serves as a coordination point for NADP(+).

This sequence belongs to the ketopantoate reductase family.

This is an uncharacterized protein from Bacillus subtilis (strain 168).